Here is a 349-residue protein sequence, read N- to C-terminus: MKLYLVTFLFFVIYKNKTFVDCVTKKQDVYLDDEFKSFTFFFASSPSANFLSRIVHSNEAKFTQIKNKTDIWNKTIDKAYSINQVSNNIMRVYISLLSLFLFPYFSYIGIFGHSRNKANLTLSSLLAYFALLVSFFLFNGILNIGFVTSLPLVVAVLIFILGVSDCEINFLYKYTRYIFCFIISKLIYDVVTYISKDGANIFDYGFSGHIYMNLLRGKYYIVLKLIHLIILSLISLIIIKICPKIFSNNHLKSPISITFDKYIISFLCSLPIATAISQVFYLLSKTINPIDPSIFFMIPSSINFSSTGTIFSLSIWILMSYLMTFLRNKVEADFNNILNKIPNNLPDFI.

The signal sequence occupies residues 1-18 (MKLYLVTFLFFVIYKNKT). The Extracellular segment spans residues 19-91 (FVDCVTKKQD…INQVSNNIMR (73 aa)). Residues 92–112 (VYISLLSLFLFPYFSYIGIFG) traverse the membrane as a helical segment. Residues 113 to 117 (HSRNK) lie on the Cytoplasmic side of the membrane. The helical transmembrane segment at 118 to 138 (ANLTLSSLLAYFALLVSFFLF) threads the bilayer. At 139–140 (NG) the chain is on the extracellular side. A helical transmembrane segment spans residues 141 to 161 (ILNIGFVTSLPLVVAVLIFIL). The Cytoplasmic segment spans residues 162 to 176 (GVSDCEINFLYKYTR). The helical transmembrane segment at 177-197 (YIFCFIISKLIYDVVTYISKD) threads the bilayer. At 198–218 (GANIFDYGFSGHIYMNLLRGK) the chain is on the extracellular side. Residues 219–239 (YYIVLKLIHLIILSLISLIII) form a helical membrane-spanning segment. Residues 240–262 (KICPKIFSNNHLKSPISITFDKY) lie on the Cytoplasmic side of the membrane. A helical membrane pass occupies residues 263 to 283 (IISFLCSLPIATAISQVFYLL). The Extracellular portion of the chain corresponds to 284–305 (SKTINPIDPSIFFMIPSSINFS). The chain crosses the membrane as a helical span at residues 306–326 (STGTIFSLSIWILMSYLMTFL). The Cytoplasmic portion of the chain corresponds to 327–349 (RNKVEADFNNILNKIPNNLPDFI).

The protein resides in the cell membrane. Functionally, involved in the development of male gametocytes. The chain is Sexual stage-specific protein G37 from Plasmodium berghei (strain Anka).